Here is a 669-residue protein sequence, read N- to C-terminus: NADH-ubiquinone oxidoreductase chain 5 (669 aa).

The next 14 helical transmembrane spans lie at Leu3–Leu23, Ser40–Arg60, Phe76–Val96, Phe113–Phe133, Leu136–Thr156, Ala217–Gly237, Thr250–Ala270, Leu283–Leu303, Leu319–Met339, Asn340–Ser360, Phe375–Leu395, Asn417–Leu437, Ile461–Ala481, and Gly619–Phe639.

It belongs to the complex I subunit 5 family. As to quaternary structure, complex I is composed of at least 49 different subunits.

It is found in the mitochondrion inner membrane. The enzyme catalyses a ubiquinone + NADH + 5 H(+)(in) = a ubiquinol + NAD(+) + 4 H(+)(out). Functionally, core subunit of the mitochondrial membrane respiratory chain NADH dehydrogenase (Complex I) that is believed to belong to the minimal assembly required for catalysis. Complex I functions in the transfer of electrons from NADH to the respiratory chain. The immediate electron acceptor for the enzyme is believed to be ubiquinone. The sequence is that of NADH-ubiquinone oxidoreductase chain 5 (ND5) from Arabidopsis thaliana (Mouse-ear cress).